The following is a 573-amino-acid chain: F-box/WD repeat-containing protein 5 (573 aa).

Residues 3–49 (EGGLPLLPDSLVYQIFLSLGPADVLAAGLVCRQWQAVSRDEFLWKEQ) form the F-box domain. A WD 1 repeat occupies 90 to 129 (EHTDQVLHLSFSHSGYQFASCSKDCTVKIWNNDLTISLLH). Serine 151 is subject to Phosphoserine; by PLK4. Residues 308-316 (RRVFDSVLD) carry the D-box motif. 2 WD repeats span residues 470 to 509 (TPND…CLAK) and 511 to 551 (RHED…RVLQ).

The protein belongs to the FBXW5 family. Part of the SCF (SKP1-CUL1-F-box) E3 ubiquitin-protein ligase complex SCF(FBXW5) composed of CUL1, SKP1, RBX1 and FBXW5. Component of the DCX(FBXW5) E3 ubiquitin ligase complex, at least composed of (CUL4A or CUL4B), DDB1, FBXW5 and RBX1. Interacts with CDC20, TSC1, TSC2 and SASS6. Interacts with EPS8. Interacts with TNFAIP8L1; TNFAIP8L1 competes with TSC2 to bind FBXW5 increasing TSC2 stability by preventing its ubiquitination. Phosphorylated at Ser-151 by PLK4 during the G1/S transition, leading to inhibit its ability to ubiquitinate SASS6. Post-translationally, ubiquitinated and degraded by the APC/C complex during mitosis and G1 phase. In terms of tissue distribution, widely expressed in adult and embryonal tissues.

It is found in the cytoplasm. It participates in protein modification; protein ubiquitination. Functionally, substrate recognition component of both SCF (SKP1-CUL1-F-box protein) and DCX (DDB1-CUL4-X-box) E3 ubiquitin-protein ligase complexes. Substrate-specific adapter of the DCX(FBXW5) E3 ubiquitin-protein ligase complex which mediates the polyubiquitination and subsequent degradation of TSC2. May also act as a negative regulator of MAP3K7/TAK1 signaling in the interleukin-1B (IL1B) signaling pathway. Substrate recognition component of the SCF(FBXW5) E3 ubiquitin-protein ligase complex which mediates the ubiquitination and subsequent proteasomal degradation of SASS6 during S phase, leading to prevent centriole reduplication. The SCF(FBXW5) complex also mediates ubiquitination and degradation of actin-regulator EPS8 during G2 phase, leading to the transient degradation of EPS8 and subsequent cell shape changes required to allow mitotic progression. The protein is F-box/WD repeat-containing protein 5 (Fbxw5) of Mus musculus (Mouse).